Here is a 554-residue protein sequence, read N- to C-terminus: DnaJ homolog subfamily C member 1 (554 aa).

The N-terminal stretch at 1-47 (MTAPCSQPAQLPGRRQLGLVPFPPPPPRTPLLWLLLLLLAAVAPARG) is a signal peptide. Residues 48 to 153 (WESGDLELFD…RRVRKMSNAE (106 aa)) are Lumenal-facing. The J domain maps to 65–129 (NFYQFLGVQQ…ERRQRYDDIL (65 aa)). A helical transmembrane segment spans residues 154–174 (LALLLFIILTVGHYAVVWSIY). Over 175–554 (LEKQLDELLS…LVQKKKQAKS (380 aa)) the chain is Cytoplasmic. The region spanning 325–379 (KQAPEWTEEDLSQLTRSMVKFPGGTPGRWEKIAHELGRSVTDVTTKAKQLKDSVT) is the SANT 1 domain. The residue at position 381 (serine 381) is a Phosphoserine. Positions 392–405 (STVQNSRPIKTATT) are enriched in polar residues. Residues 392–500 (STVQNSRPIK…RSAEEPWTQN (109 aa)) are disordered. The segment covering 421-432 (AAEEEQEGDSGE) has biased composition (acidic residues). Position 430 is a phosphoserine (serine 430). The segment covering 455 to 472 (AKPEPEEKSRAKRQKDFD) has biased composition (basic and acidic residues). Residues 473-482 (IAEQNESSDE) are compositionally biased toward acidic residues. Phosphoserine occurs at positions 479, 480, 484, and 492. Residues 483 to 494 (ESLRKERARSAE) are compositionally biased toward basic and acidic residues. In terms of domain architecture, SANT 2 spans 492 to 547 (SAEEPWTQNQQKLLELALQQYPRGSSDRWDKIARCVPSKSKEDCIARYKLLVELVQ).

Interacts (via J domain) with HSPA5. Interacts (via cytosolic domain) with ribosomes. Interacts (via SANT 2 domain) with SERPINA3; the interaction delays the formation of the covalent inhibitory complex SERPINA3-chymotrypsin, but does not alter the catalytic activity of SERPINA3. Interacts (via SANT 2 domain) with ITIH4 (via C-terminus); the interaction protects ITIH4 against in vitro cleavage by kallikrein.

Its subcellular location is the endoplasmic reticulum membrane. It localises to the nucleus membrane. It is found in the microsome membrane. Its function is as follows. May modulate protein synthesis. This chain is DnaJ homolog subfamily C member 1 (DNAJC1), found in Homo sapiens (Human).